The sequence spans 188 residues: Cell division protein SepF (188 aa).

Residues 29-53 (EQQDQDQRATQADGGALATLGDSNP) are disordered.

Belongs to the SepF family. In terms of assembly, homodimer. Interacts with FtsZ.

The protein localises to the cytoplasm. Its function is as follows. Cell division protein that is part of the divisome complex and is recruited early to the Z-ring. Probably stimulates Z-ring formation, perhaps through the cross-linking of FtsZ protofilaments. Its function overlaps with FtsA. This Synechococcus sp. (strain CC9902) protein is Cell division protein SepF.